A 221-amino-acid chain; its full sequence is PKHD-type hydroxylase PMN2A_0775 (221 aa).

The 95-residue stretch at 80 to 174 folds into the Fe2OG dioxygenase domain; that stretch reads LIHGVMFTQS…RHVCVGWIQS (95 aa). Residues His-98, Asp-100, and His-155 each contribute to the Fe cation site. Arg-165 provides a ligand contact to 2-oxoglutarate.

Fe(2+) serves as cofactor. The cofactor is L-ascorbate.

The protein is PKHD-type hydroxylase PMN2A_0775 of Prochlorococcus marinus (strain NATL2A).